A 1044-amino-acid chain; its full sequence is Multiple epidermal growth factor-like domains protein 11 (1044 aa).

The first 19 residues, 1–19 (MVLSLTGLIAFSFLQATLA), serve as a signal peptide directing secretion. Topologically, residues 20-848 (LNPEDPNVCS…SPALGAERHS (829 aa)) are extracellular. Residues 24-101 (DPNVCSHWES…YYESGDFCIP (78 aa)) enclose the EMI domain. 14 disulfide bridges follow: C28/C89, C54/C63, C88/C99, C103/C118, C120/C129, C146/C154, C148/C161, C163/C172, C185/C197, C191/C204, C206/C215, C228/C240, C234/C247, and C249/C258. EGF-like domains lie at 95–130 (SGDF…PDCS), 143–173 (SNRC…WRCE), 181–216 (HGKG…VYCE), 224–259 (HGAH…AVCA), 267–302 (FGQN…DRCQ), 310–345 (FGFQ…PRCQ), 399–434 (YGDG…EVCA), 442–477 (YGPN…LDCT), and 490–520 (NESC…DTCE). Residue N270 is glycosylated (N-linked (GlcNAc...) asparagine). Disulfide bonds link C271/C283, C277/C290, C292/C301, C314/C326, C320/C333, C335/C344, C403/C415, C409/C422, C424/C433, C446/C458, C452/C465, C467/C476, C493/C501, C495/C508, and C510/C519. An N-linked (GlcNAc...) asparagine glycan is attached at N531. EGF-like domains are found at residues 571-606 (WGPN…PLCQ), 659-694 (FGQD…KDCS), 707-737 (FHAC…LFCT), 750-780 (GRVC…QHCE), and 788-823 (FGYG…IRCD). 15 cysteine pairs are disulfide-bonded: C575-C587, C581-C594, C596-C605, C663-C675, C669-C682, C684-C693, C710-C718, C712-C725, C727-C736, C753-C761, C755-C768, C770-C779, C792-C804, C798-C811, and C813-C822. A helical membrane pass occupies residues 849-869 (VGAVTGIMLLLFLIVVLLGLF). Residues 870 to 1044 (AWHRRRQKEK…ANGPSQDKQS (175 aa)) are Cytoplasmic-facing. A disordered region spans residues 1023 to 1044 (GHYDLLPVRQSPANGPSQDKQS). Residues 1033–1044 (SPANGPSQDKQS) show a composition bias toward polar residues.

This sequence belongs to the MEGF family. In terms of assembly, homomer. Does not interact with MEGF10.

It localises to the cell membrane. Its subcellular location is the basolateral cell membrane. Its function is as follows. May regulate the mosaic spacing of specific neuron subtypes in the retina through homotypic retinal neuron repulsion. Mosaics provide a mechanism to distribute each cell type evenly across the retina, ensuring that all parts of the visual field have access to a full set of processing elements. This chain is Multiple epidermal growth factor-like domains protein 11 (MEGF11), found in Homo sapiens (Human).